A 179-amino-acid chain; its full sequence is Shikimate kinase (179 aa).

14-19 (GAGKTT) provides a ligand contact to ATP. Thr18 is a binding site for Mg(2+). Substrate is bound by residues Asp36, Arg60, and Gly82. Position 120 (Arg120) interacts with ATP. Substrate is bound at residue Arg139.

It belongs to the shikimate kinase family. In terms of assembly, monomer. The cofactor is Mg(2+).

Its subcellular location is the cytoplasm. It catalyses the reaction shikimate + ATP = 3-phosphoshikimate + ADP + H(+). The protein operates within metabolic intermediate biosynthesis; chorismate biosynthesis; chorismate from D-erythrose 4-phosphate and phosphoenolpyruvate: step 5/7. Functionally, catalyzes the specific phosphorylation of the 3-hydroxyl group of shikimic acid using ATP as a cosubstrate. In Methylococcus capsulatus (strain ATCC 33009 / NCIMB 11132 / Bath), this protein is Shikimate kinase.